Here is a 118-residue protein sequence, read N- to C-terminus: Large ribosomal subunit protein bL20 (118 aa).

This sequence belongs to the bacterial ribosomal protein bL20 family.

Functionally, binds directly to 23S ribosomal RNA and is necessary for the in vitro assembly process of the 50S ribosomal subunit. It is not involved in the protein synthesizing functions of that subunit. The chain is Large ribosomal subunit protein bL20 from Ralstonia nicotianae (strain ATCC BAA-1114 / GMI1000) (Ralstonia solanacearum).